We begin with the raw amino-acid sequence, 156 residues long: Ribosome maturation factor RimP (156 aa).

Belongs to the RimP family.

The protein localises to the cytoplasm. Its function is as follows. Required for maturation of 30S ribosomal subunits. In Oceanobacillus iheyensis (strain DSM 14371 / CIP 107618 / JCM 11309 / KCTC 3954 / HTE831), this protein is Ribosome maturation factor RimP.